We begin with the raw amino-acid sequence, 99 residues long: Aspartyl/glutamyl-tRNA(Asn/Gln) amidotransferase subunit C (99 aa).

Belongs to the GatC family. As to quaternary structure, heterotrimer of A, B and C subunits.

The enzyme catalyses L-glutamyl-tRNA(Gln) + L-glutamine + ATP + H2O = L-glutaminyl-tRNA(Gln) + L-glutamate + ADP + phosphate + H(+). The catalysed reaction is L-aspartyl-tRNA(Asn) + L-glutamine + ATP + H2O = L-asparaginyl-tRNA(Asn) + L-glutamate + ADP + phosphate + 2 H(+). In terms of biological role, allows the formation of correctly charged Asn-tRNA(Asn) or Gln-tRNA(Gln) through the transamidation of misacylated Asp-tRNA(Asn) or Glu-tRNA(Gln) in organisms which lack either or both of asparaginyl-tRNA or glutaminyl-tRNA synthetases. The reaction takes place in the presence of glutamine and ATP through an activated phospho-Asp-tRNA(Asn) or phospho-Glu-tRNA(Gln). The sequence is that of Aspartyl/glutamyl-tRNA(Asn/Gln) amidotransferase subunit C from Burkholderia cenocepacia (strain ATCC BAA-245 / DSM 16553 / LMG 16656 / NCTC 13227 / J2315 / CF5610) (Burkholderia cepacia (strain J2315)).